Here is a 320-residue protein sequence, read N- to C-terminus: MACLRPLQVHNLKKGEKVNFKHYSNGDVARYDMNKNYIVNDSVPCRKCVGCRLDNSAEWGVRASLEIKSNPKHNWFVTLTYSDEHLVYNALGRPNCVPEHITKFIKSLRKYFERRGHIGIKYLASNEYGTKRMRPHYHICFFNLPLDDLEKTIDSQKGYQQWTSKTISRFWDKGFHTIGELTYHSANYTARYTTKKLGVKDYKALQLVPEKLRMSKGIGLKYFMENKERIYKEDSVLISTDKGIKRFKVPKYFDRRMEREWQDEFYLDYIKEKREKVAKRTLFQRQIVSSRSYTDYLGDEQKKLNNIVKRLTRPLKTGKK.

Residues Tyr-188 and Tyr-192 each act as O-(5'-phospho-DNA)-tyrosine intermediate in the active site.

This sequence belongs to the microviridae Rep protein family.

The enzyme catalyses ATP + (deoxyribonucleotide)n-3'-hydroxyl + 5'-phospho-(deoxyribonucleotide)m = (deoxyribonucleotide)n+m + AMP + diphosphate.. Its function is as follows. Plays an essential role in viral DNA replication. Binds the origin of replication and cleaves the dsDNA replicative form I (RFI) and becomes covalently bound to it via phosphotyrosine bond, generating the dsDNA replicative form II (RFII). In turn, viral DNA replication initiates at the 3'-OH of the cleavage site. After one round of rolling circle synthesis, protein ORF2 is linked to the newly synthesized ssDNA and joins the ends of the displaced strand to generate a circular single-stranded molecule ready to be packed into a virion. The sequence is that of Replication-associated protein ORF2 from Spiroplasma virus 4 (SpV4).